Consider the following 257-residue polypeptide: 1-(5-phosphoribosyl)-5-[(5-phosphoribosylamino)methylideneamino] imidazole-4-carboxamide isomerase (257 aa).

The Proton acceptor role is filled by D8. The active-site Proton donor is the D130.

The protein belongs to the HisA/HisF family.

It localises to the cytoplasm. The enzyme catalyses 1-(5-phospho-beta-D-ribosyl)-5-[(5-phospho-beta-D-ribosylamino)methylideneamino]imidazole-4-carboxamide = 5-[(5-phospho-1-deoxy-D-ribulos-1-ylimino)methylamino]-1-(5-phospho-beta-D-ribosyl)imidazole-4-carboxamide. Its pathway is amino-acid biosynthesis; L-histidine biosynthesis; L-histidine from 5-phospho-alpha-D-ribose 1-diphosphate: step 4/9. In Chlorobium chlorochromatii (strain CaD3), this protein is 1-(5-phosphoribosyl)-5-[(5-phosphoribosylamino)methylideneamino] imidazole-4-carboxamide isomerase.